A 144-amino-acid chain; its full sequence is 3-dehydroquinate dehydratase (144 aa).

The active-site Proton acceptor is Y24. Substrate contacts are provided by N73, H79, and D86. H99 serves as the catalytic Proton donor. Substrate contacts are provided by residues L100 to S101 and R110.

It belongs to the type-II 3-dehydroquinase family. Homododecamer.

It carries out the reaction 3-dehydroquinate = 3-dehydroshikimate + H2O. The protein operates within metabolic intermediate biosynthesis; chorismate biosynthesis; chorismate from D-erythrose 4-phosphate and phosphoenolpyruvate: step 3/7. Functionally, catalyzes a trans-dehydration via an enolate intermediate. The polypeptide is 3-dehydroquinate dehydratase (Shewanella sp. (strain ANA-3)).